The following is a 258-amino-acid chain: Phosphate import ATP-binding protein PstB (258 aa).

The 242-residue stretch at 12–253 folds into the ABC transporter domain; it reads IQVHNLNFYY…PKMKQTEDYI (242 aa). Residue 44 to 51 coordinates ATP; the sequence is GPSGCGKS.

This sequence belongs to the ABC transporter superfamily. Phosphate importer (TC 3.A.1.7) family. In terms of assembly, the complex is composed of two ATP-binding proteins (PstB), two transmembrane proteins (PstC and PstA) and a solute-binding protein (PstS).

Its subcellular location is the cell inner membrane. It carries out the reaction phosphate(out) + ATP + H2O = ADP + 2 phosphate(in) + H(+). Its function is as follows. Part of the ABC transporter complex PstSACB involved in phosphate import. Responsible for energy coupling to the transport system. In Photorhabdus laumondii subsp. laumondii (strain DSM 15139 / CIP 105565 / TT01) (Photorhabdus luminescens subsp. laumondii), this protein is Phosphate import ATP-binding protein PstB.